The primary structure comprises 413 residues: Transmembrane protein 184A (413 aa).

7 helical membrane passes run 47–69 (WLFL…ALVL), 93–113 (LLLI…LLGD), 130–150 (FVIY…GAIM), 187–207 (LQFC…QAFG), 223–243 (VTLI…LFYF), 258–278 (FLTI…LAIL), and 300–320 (LAAG…SVAL). The segment at 372 to 413 (QHYTQQATHEAPRPGTHPSGGSGGSRKSRSLEKRMLIPSEDL) is disordered.

Belongs to the TMEM184 family. Expressed in vascular cells (at protein level).

It localises to the cell membrane. It is found in the cytoplasm. The protein localises to the perinuclear region. Its subcellular location is the cytoplasmic vesicle membrane. The protein resides in the early endosome membrane. It localises to the endosome. It is found in the cytoplasmic vesicle. The protein localises to the secretory vesicle membrane. Functionally, acts as a heparin receptor in vascular cells. May be involved in vesicle transport in exocrine cells and Sertoli cells. The sequence is that of Transmembrane protein 184A (TMEM184A) from Homo sapiens (Human).